The chain runs to 225 residues: UPF0758 protein BB3258 (225 aa).

The region spanning 103-225 (ALANPDLVRR…TVSMAAQGHL (123 aa)) is the MPN domain. The Zn(2+) site is built by histidine 174, histidine 176, and aspartate 187. Positions 174-187 (HNHPGGTAAASAAD) match the JAMM motif motif.

Belongs to the UPF0758 family.

In Bordetella bronchiseptica (strain ATCC BAA-588 / NCTC 13252 / RB50) (Alcaligenes bronchisepticus), this protein is UPF0758 protein BB3258.